The following is a 328-amino-acid chain: Methionine import ATP-binding protein MetN 1 (328 aa).

Positions 2–241 (ISIERLSKTY…PLSRLGRSLL (240 aa)) constitute an ABC transporter domain. Residue 38-45 (GRSGAGKS) participates in ATP binding.

It belongs to the ABC transporter superfamily. Methionine importer (TC 3.A.1.24) family. As to quaternary structure, the complex is composed of two ATP-binding proteins (MetN), two transmembrane proteins (MetI) and a solute-binding protein (MetQ).

The protein localises to the cell inner membrane. The enzyme catalyses L-methionine(out) + ATP + H2O = L-methionine(in) + ADP + phosphate + H(+). It catalyses the reaction D-methionine(out) + ATP + H2O = D-methionine(in) + ADP + phosphate + H(+). In terms of biological role, part of the ABC transporter complex MetNIQ involved in methionine import. Responsible for energy coupling to the transport system. This Yersinia pestis bv. Antiqua (strain Nepal516) protein is Methionine import ATP-binding protein MetN 1.